We begin with the raw amino-acid sequence, 237 residues long: uncharacterized protein (237 aa).

50–57 contributes to the ATP binding site; sequence APPGTGKS.

This is an uncharacterized protein from Escherichia coli (strain K12).